We begin with the raw amino-acid sequence, 853 residues long: uncharacterized protein (853 aa).

The segment covering 1–11 (MAPRKKAVTKK) has biased composition (basic residues). Disordered stretches follow at residues 1-448 (MAPR…SNNV), 485-621 (IAPT…NYFN), and 635-658 (ENYK…NEDE). The segment covering 20 to 37 (IEEEIIEEPVDEIVESDG) has biased composition (acidic residues). The span at 42 to 55 (NKKKGKRKSSKKSK) shows a compositional bias: basic residues. Residues 60-74 (ENVEEEEQDQEEEEE) are compositionally biased toward acidic residues. Residues 75–87 (GNKKQKEENDADK) are compositionally biased toward basic and acidic residues. The span at 88-107 (KSRKHDEHRKKRDSKNRRSH) shows a compositional bias: basic residues. Residues 112–121 (ENEEGEEDDE) show a composition bias toward acidic residues. The segment covering 124 to 139 (RKKRRRRKHREKRKKN) has biased composition (basic residues). Composition is skewed to acidic residues over residues 143 to 166 (EEEE…EEDV) and 179 to 197 (DFDE…EEEQ). The segment covering 216–228 (DKSKKRKSKKKKR) has biased composition (basic residues). Composition is skewed to acidic residues over residues 232 to 260 (DDDD…EDVN) and 268 to 286 (KEEE…DEEK). Basic and acidic residues-rich tracts occupy residues 287-361 (QSEN…RDHY), 370-400 (SRDH…RDHY), and 411-425 (RSRD…DEKS). Composition is skewed to low complexity over residues 426-447 (SSSN…SSNN), 510-613 (NNDN…SNSS), and 636-652 (NYKN…NNNK).

This is an uncharacterized protein from Dictyostelium discoideum (Social amoeba).